Reading from the N-terminus, the 88-residue chain is UPF0297 protein GK2555 (88 aa).

Belongs to the UPF0297 family.

This Geobacillus kaustophilus (strain HTA426) protein is UPF0297 protein GK2555.